A 418-amino-acid chain; its full sequence is Gamma-glutamyl phosphate reductase (418 aa).

Belongs to the gamma-glutamyl phosphate reductase family.

It localises to the cytoplasm. It catalyses the reaction L-glutamate 5-semialdehyde + phosphate + NADP(+) = L-glutamyl 5-phosphate + NADPH + H(+). Its pathway is amino-acid biosynthesis; L-proline biosynthesis; L-glutamate 5-semialdehyde from L-glutamate: step 2/2. Its function is as follows. Catalyzes the NADPH-dependent reduction of L-glutamate 5-phosphate into L-glutamate 5-semialdehyde and phosphate. The product spontaneously undergoes cyclization to form 1-pyrroline-5-carboxylate. The sequence is that of Gamma-glutamyl phosphate reductase from Desulfotalea psychrophila (strain LSv54 / DSM 12343).